Consider the following 192-residue polypeptide: Pyridoxal 5'-phosphate synthase subunit PdxT (192 aa).

53-55 (GES) contacts L-glutamine. The active-site Nucleophile is cysteine 82. L-glutamine contacts are provided by residues arginine 108 and 134 to 135 (IR). Residues histidine 170 and glutamate 172 each act as charge relay system in the active site.

It belongs to the glutaminase PdxT/SNO family. As to quaternary structure, in the presence of PdxS, forms a dodecamer of heterodimers. Only shows activity in the heterodimer.

It carries out the reaction aldehydo-D-ribose 5-phosphate + D-glyceraldehyde 3-phosphate + L-glutamine = pyridoxal 5'-phosphate + L-glutamate + phosphate + 3 H2O + H(+). The catalysed reaction is L-glutamine + H2O = L-glutamate + NH4(+). It functions in the pathway cofactor biosynthesis; pyridoxal 5'-phosphate biosynthesis. Its function is as follows. Catalyzes the hydrolysis of glutamine to glutamate and ammonia as part of the biosynthesis of pyridoxal 5'-phosphate. The resulting ammonia molecule is channeled to the active site of PdxS. The sequence is that of Pyridoxal 5'-phosphate synthase subunit PdxT from Methanosphaera stadtmanae (strain ATCC 43021 / DSM 3091 / JCM 11832 / MCB-3).